Reading from the N-terminus, the 568-residue chain is Multidrug and toxin extrusion protein 1 (568 aa).

Position 1 is an N-acetylmethionine (methionine 1). The Cytoplasmic segment spans residues 1–36 (MEAPVELGPGGRQASPERRHWLRCLVLSDFREELRA). The chain crosses the membrane as a helical span at residues 37–57 (LLVLACPAFLAQLMVFLISFV). Residues 58–71 (SSVFCGHLSKLELN) lie on the Extracellular side of the membrane. A helical membrane pass occupies residues 72–92 (AVTLAIAVINVMGVSVGFGLS). Over 93–119 (SACDTLISQTYGSRNLKHVGVILQRGS) the chain is Cytoplasmic. A helical membrane pass occupies residues 120 to 140 (LILLLCCLPCWALFLNTQHIL). The Extracellular segment spans residues 141–151 (LLFRQDPAVSR). Residues 152–172 (LTQTYVTIFIPALPATFLYTL) form a helical membrane-spanning segment. Residues 173-175 (QVK) lie on the Cytoplasmic side of the membrane. Residues 176–196 (YLLNQGIVLPQVVTGVAANLV) form a helical membrane-spanning segment. At 197–214 (NALANYLFVYQLHLGVMG) the chain is on the extracellular side. Residues 215 to 235 (SALANTVAQFTLALLLFLYIL) form a helical membrane-spanning segment. The Cytoplasmic portion of the chain corresponds to 236–255 (RSKVYQATWGGWSLECLQDW). The helical transmembrane segment at 256–278 (ASFFRLAIPSMLMLCMEWWAYEI) threads the bilayer. The Extracellular portion of the chain corresponds to 279-294 (GSFLSGILGMVELGAQ). A helical transmembrane segment spans residues 295–315 (SVTYELAVIVYMIPMGLSVAV). Topologically, residues 316–335 (NVRVGNALGAGNIEQAKKSS) are cytoplasmic. A helical transmembrane segment spans residues 336–356 (AVALLVTELIAVVFCVMLLSC). Over 357–369 (KDLVGYIFTSDRD) the chain is Extracellular. A helical transmembrane segment spans residues 370 to 390 (IIALVAQVTPIYAVSHLFESL). The Cytoplasmic portion of the chain corresponds to 391–407 (AGTSGGILRGSGNQKFG). Residues 408–430 (AIVNAIGYYVVGLPIGIALMFAA) form a helical membrane-spanning segment. Residues 431–433 (KLG) lie on the Extracellular side of the membrane. The helical transmembrane segment at 434–456 (VIGLWLGIVVCAVSQAVCFLGFI) threads the bilayer. Over 457 to 544 (ARLNWTKACQ…LSGKQLALRR (88 aa)) the chain is Cytoplasmic. The helical transmembrane segment at 545-565 (GLLLLGVILVLLAGILVKVYV) threads the bilayer. Residues 566–568 (RTQ) are Extracellular-facing.

It belongs to the multi antimicrobial extrusion (MATE) (TC 2.A.66.1) family. As to expression, predominantly expressed in kidney and liver.

The protein localises to the cell membrane. The protein resides in the apical cell membrane. It catalyses the reaction thiamine(out) + H(+)(in) = thiamine(in) + H(+)(out). The catalysed reaction is estrone 3-sulfate(in) + H(+)(out) = estrone 3-sulfate(out) + H(+)(in). The enzyme catalyses creatinine(in) + H(+)(out) = creatinine(out) + H(+)(in). It carries out the reaction agmatine(in) + H(+)(out) = agmatine(out) + H(+)(in). Functionally, multidrug efflux pump that functions as a H(+)/organic cation antiporter. Plays a physiological role in the excretion of cationic compounds including endogenous metabolites, drugs, toxins through the kidney and liver, into urine and bile respectively. Mediates the efflux of endogenous compounds such as creatinine, vitamin B1/thiamine, agmatine and estrone-3-sulfate. May also contribute to regulate the transport of cationic compounds in testis across the blood-testis-barrier. The sequence is that of Multidrug and toxin extrusion protein 1 (SLC47A1) from Oryctolagus cuniculus (Rabbit).